Reading from the N-terminus, the 299-residue chain is Oxygen-dependent coproporphyrinogen-III oxidase (299 aa).

Residue serine 92 participates in substrate binding. The a divalent metal cation site is built by histidine 96 and histidine 106. The active-site Proton donor is the histidine 106. A substrate-binding site is contributed by 108-110 (NVR). A divalent metal cation is bound by residues histidine 145 and histidine 175. The tract at residues 240 to 275 (YVEFNLVWDRGTLFGLQTGGRTESILMSMPPLVRWE) is important for dimerization. Position 258 to 260 (258 to 260 (GGR)) interacts with substrate.

It belongs to the aerobic coproporphyrinogen-III oxidase family. As to quaternary structure, homodimer. Requires a divalent metal cation as cofactor.

The protein resides in the cytoplasm. It catalyses the reaction coproporphyrinogen III + O2 + 2 H(+) = protoporphyrinogen IX + 2 CO2 + 2 H2O. Its pathway is porphyrin-containing compound metabolism; protoporphyrin-IX biosynthesis; protoporphyrinogen-IX from coproporphyrinogen-III (O2 route): step 1/1. Functionally, involved in the heme biosynthesis. Catalyzes the aerobic oxidative decarboxylation of propionate groups of rings A and B of coproporphyrinogen-III to yield the vinyl groups in protoporphyrinogen-IX. This Salmonella newport (strain SL254) protein is Oxygen-dependent coproporphyrinogen-III oxidase.